Consider the following 259-residue polypeptide: Probable ABC transporter permease protein RP096 (259 aa).

Transmembrane regions (helical) follow at residues 13-35 (TIKF…SSII), 49-69 (LFIG…SGAV), 148-168 (VIAA…IGVM), 195-215 (PIDV…ISII), and 237-257 (AVVN…ELFF).

This sequence belongs to the MlaE permease family.

The protein localises to the cell inner membrane. Functionally, could be part of an ABC transporter complex. In Rickettsia prowazekii (strain Madrid E), this protein is Probable ABC transporter permease protein RP096.